A 101-amino-acid polypeptide reads, in one-letter code: Large ribosomal subunit protein uL24 (101 aa).

It belongs to the universal ribosomal protein uL24 family. Part of the 50S ribosomal subunit.

In terms of biological role, one of two assembly initiator proteins, it binds directly to the 5'-end of the 23S rRNA, where it nucleates assembly of the 50S subunit. One of the proteins that surrounds the polypeptide exit tunnel on the outside of the subunit. This chain is Large ribosomal subunit protein uL24, found in Ruegeria sp. (strain TM1040) (Silicibacter sp.).